We begin with the raw amino-acid sequence, 449 residues long: Asparagine--tRNA ligase (449 aa).

The protein belongs to the class-II aminoacyl-tRNA synthetase family. Homodimer.

Its subcellular location is the cytoplasm. It catalyses the reaction tRNA(Asn) + L-asparagine + ATP = L-asparaginyl-tRNA(Asn) + AMP + diphosphate + H(+). The chain is Asparagine--tRNA ligase from Mesomycoplasma hyopneumoniae (strain J / ATCC 25934 / NCTC 10110) (Mycoplasma hyopneumoniae).